A 521-amino-acid chain; its full sequence is Bifunctional purine biosynthesis protein PurH (521 aa).

The region spanning 1-145 (MIKQALISVS…KNHRDVTVVV (145 aa)) is the MGS-like domain.

Belongs to the PurH family.

It carries out the reaction (6R)-10-formyltetrahydrofolate + 5-amino-1-(5-phospho-beta-D-ribosyl)imidazole-4-carboxamide = 5-formamido-1-(5-phospho-D-ribosyl)imidazole-4-carboxamide + (6S)-5,6,7,8-tetrahydrofolate. The enzyme catalyses IMP + H2O = 5-formamido-1-(5-phospho-D-ribosyl)imidazole-4-carboxamide. Its pathway is purine metabolism; IMP biosynthesis via de novo pathway; 5-formamido-1-(5-phospho-D-ribosyl)imidazole-4-carboxamide from 5-amino-1-(5-phospho-D-ribosyl)imidazole-4-carboxamide (10-formyl THF route): step 1/1. It participates in purine metabolism; IMP biosynthesis via de novo pathway; IMP from 5-formamido-1-(5-phospho-D-ribosyl)imidazole-4-carboxamide: step 1/1. This is Bifunctional purine biosynthesis protein PurH from Burkholderia pseudomallei (strain 1710b).